The primary structure comprises 324 residues: ATP synthase mitochondrial F1 complex assembly factor 1 (324 aa).

A mitochondrion-targeting transit peptide spans Met1–Leu54.

The protein belongs to the ATP11 family. In terms of assembly, interacts with ATP5F1B; involved in the assembly of the F1 component of the mitochondrial ATP synthase (ATPase). As to expression, widely expressed but with low level.

The protein resides in the mitochondrion inner membrane. Its function is as follows. Has a complex stabilizing activity in the assembly of the mitochondrial F1-F0 complex. The chain is ATP synthase mitochondrial F1 complex assembly factor 1 from Mus musculus (Mouse).